Consider the following 274-residue polypeptide: Diaminopimelate epimerase (274 aa).

Residues Asn-11, Gln-44, and Asn-64 each contribute to the substrate site. The active-site Proton donor is Cys-73. Residues 74–75 (GN), Asn-157, Asn-190, and 208–209 (ER) contribute to the substrate site. Cys-217 acts as the Proton acceptor in catalysis. 218-219 (GS) serves as a coordination point for substrate.

This sequence belongs to the diaminopimelate epimerase family. In terms of assembly, homodimer.

It is found in the cytoplasm. The catalysed reaction is (2S,6S)-2,6-diaminopimelate = meso-2,6-diaminopimelate. The protein operates within amino-acid biosynthesis; L-lysine biosynthesis via DAP pathway; DL-2,6-diaminopimelate from LL-2,6-diaminopimelate: step 1/1. In terms of biological role, catalyzes the stereoinversion of LL-2,6-diaminopimelate (L,L-DAP) to meso-diaminopimelate (meso-DAP), a precursor of L-lysine and an essential component of the bacterial peptidoglycan. The chain is Diaminopimelate epimerase from Edwardsiella ictaluri (strain 93-146).